The sequence spans 81 residues: Photosystem I iron-sulfur center (81 aa).

2 4Fe-4S ferredoxin-type domains span residues 2-31 (AHTVKIYDNCIGCTQCVRACPLDVLEMVPW) and 39-68 (MASAPRTEDCVGCKRCETACPTDFLSIRVY). Positions 11, 14, 17, 21, 48, 51, 54, and 58 each coordinate [4Fe-4S] cluster.

In terms of assembly, the eukaryotic PSI reaction center is composed of at least 11 subunits. [4Fe-4S] cluster is required as a cofactor.

The protein localises to the plastid. It localises to the chloroplast thylakoid membrane. It carries out the reaction reduced [plastocyanin] + hnu + oxidized [2Fe-2S]-[ferredoxin] = oxidized [plastocyanin] + reduced [2Fe-2S]-[ferredoxin]. In terms of biological role, apoprotein for the two 4Fe-4S centers FA and FB of photosystem I (PSI); essential for photochemical activity. FB is the terminal electron acceptor of PSI, donating electrons to ferredoxin. The C-terminus interacts with PsaA/B/D and helps assemble the protein into the PSI complex. Required for binding of PsaD and PsaE to PSI. PSI is a plastocyanin/cytochrome c6-ferredoxin oxidoreductase, converting photonic excitation into a charge separation, which transfers an electron from the donor P700 chlorophyll pair to the spectroscopically characterized acceptors A0, A1, FX, FA and FB in turn. The sequence is that of Photosystem I iron-sulfur center from Cyanidioschyzon merolae (strain NIES-3377 / 10D) (Unicellular red alga).